The sequence spans 289 residues: ATP synthase gamma chain (289 aa).

It belongs to the ATPase gamma chain family. F-type ATPases have 2 components, CF(1) - the catalytic core - and CF(0) - the membrane proton channel. CF(1) has five subunits: alpha(3), beta(3), gamma(1), delta(1), epsilon(1). CF(0) has three main subunits: a, b and c.

It is found in the cell membrane. In terms of biological role, produces ATP from ADP in the presence of a proton gradient across the membrane. The gamma chain is believed to be important in regulating ATPase activity and the flow of protons through the CF(0) complex. The chain is ATP synthase gamma chain from Lawsonia intracellularis (strain PHE/MN1-00).